The sequence spans 561 residues: uncharacterized protein (561 aa).

The first 24 residues, M1 to C24, serve as a signal peptide directing secretion. The Lumenal segment spans residues K25–Q509. A helical transmembrane segment spans residues Y510 to N530. The Cytoplasmic segment spans residues R531 to D561.

The protein resides in the endoplasmic reticulum membrane. It localises to the golgi apparatus membrane. This is an uncharacterized protein from Schizosaccharomyces pombe (strain 972 / ATCC 24843) (Fission yeast).